Consider the following 126-residue polypeptide: UPF0212 protein TON_0350 (126 aa).

This sequence belongs to the UPF0212 family.

The protein is UPF0212 protein TON_0350 of Thermococcus onnurineus (strain NA1).